The following is a 966-amino-acid chain: SH3 domain-binding protein 4 (966 aa).

In terms of domain architecture, SH3 1 spans 57 to 116; the sequence is GAAREVVAIKDCCPSSFTTLKFSKGDRLYVLDSSGAEWWYAHNNTEMGYIPAAYVEPINY. One can recognise a ZU5 domain in the interval 322 to 457; the sequence is TNIVCRLDSS…LEPCMYVCVV (136 aa). Residues 657-727 enclose the SH3 2 domain; it reads NNLKFGKLIK…HAKNVLVVGK (71 aa).

As to quaternary structure, homodimer or homooligomer.

The protein resides in the membrane. It is found in the clathrin-coated pit. Its subcellular location is the cytoplasmic vesicle. It localises to the clathrin-coated vesicle. The protein localises to the nucleus. Functionally, possible role in regulating endocytosis of the transferrin receptor at the plasma membrane. Alternatively, may function as a negative regulator of the amino acid-induced TOR signaling by inhibiting the formation of active Rag GTPase complexes. Preferentially binds inactive Rag GTPase complexes and prevents their interaction with the mTORC1 complex inhibiting its relocalization to lysosomes and its activation. Thereby, may indirectly regulate cell growth, proliferation and autophagy. In Seriola quinqueradiata (Five-ray yellowtail), this protein is SH3 domain-binding protein 4 (sh3bp4).